We begin with the raw amino-acid sequence, 383 residues long: Chaperone protein DnaJ (383 aa).

The region spanning 5–69 (DYYDILGVSK…QKRAQYDQFG (65 aa)) is the J domain. The CR-type zinc-finger motif lies at 138-222 (GKTTTIKYDR…CHGAGHVHER (85 aa)). Zn(2+)-binding residues include cysteine 151, cysteine 154, cysteine 168, cysteine 171, cysteine 194, cysteine 197, cysteine 210, and cysteine 213. 4 CXXCXGXG motif repeats span residues 151 to 158 (CKTCHGTG), 168 to 175 (CPRCHGAG), 194 to 201 (CPECNGTG), and 210 to 217 (CDTCHGAG).

Belongs to the DnaJ family. Homodimer. Zn(2+) serves as cofactor.

Its subcellular location is the cytoplasm. Functionally, participates actively in the response to hyperosmotic and heat shock by preventing the aggregation of stress-denatured proteins and by disaggregating proteins, also in an autonomous, DnaK-independent fashion. Unfolded proteins bind initially to DnaJ; upon interaction with the DnaJ-bound protein, DnaK hydrolyzes its bound ATP, resulting in the formation of a stable complex. GrpE releases ADP from DnaK; ATP binding to DnaK triggers the release of the substrate protein, thus completing the reaction cycle. Several rounds of ATP-dependent interactions between DnaJ, DnaK and GrpE are required for fully efficient folding. Also involved, together with DnaK and GrpE, in the DNA replication of plasmids through activation of initiation proteins. The polypeptide is Chaperone protein DnaJ (Limosilactobacillus reuteri (strain DSM 20016) (Lactobacillus reuteri)).